A 1057-amino-acid chain; its full sequence is Atrial natriuretic peptide receptor 1 (1057 aa).

The first 28 residues, 1-28, serve as a signal peptide directing secretion; it reads MPGSRRVRPRLRALLLLPPLLLLRSGHA. At 29-469 the chain is on the extracellular side; that stretch reads SDLTVAVVLP…CNQDHFSTLE (441 aa). Residue N41 is glycosylated (N-linked (GlcNAc...) asparagine). Chloride contacts are provided by S81, G113, and C114. Intrachain disulfides connect C88–C114 and C192–C241. Residues N208, N334, N375, N382, and N423 are each glycosylated (N-linked (GlcNAc...) asparagine). The cysteines at positions 451 and 460 are disulfide-linked. A helical membrane pass occupies residues 470 to 490; that stretch reads VLALVGSLSLVSFLIVSFFIY. The Cytoplasmic segment spans residues 491–1057; the sequence is RKMQLEKELV…LGERGCSTRG (567 aa). Phosphoserine is present on residues S515 and S525. One can recognise a Protein kinase domain in the interval 524–801; that stretch reads GSRLTLSGRG…QIRLALRKFN (278 aa). T528 carries the post-translational modification Phosphothreonine. Residues S530, S534, and S538 each carry the phosphoserine modification. Residue T541 is modified to Phosphothreonine. Positions 872 to 1002 constitute a Guanylate cyclase domain; it reads TIYFSDIVGF…DTVNTASRME (131 aa).

It belongs to the adenylyl cyclase class-4/guanylyl cyclase family. In terms of assembly, homodimer. In terms of processing, phosphorylation of the protein kinase-like domain is required for full activation by ANP.

It is found in the membrane. It carries out the reaction GTP = 3',5'-cyclic GMP + diphosphate. Receptor for the atrial natriuretic peptide NPPA/ANP and the brain natriuretic peptide NPPB/BNP which are potent vasoactive hormones playing a key role in cardiovascular homeostasis. Plays an essential role in the regulation of endothelial cell senescence and vascular aging. Upon activation by ANP or BNP, stimulates the production of cyclic guanosine monophosphate (cGMP) that promotes vascular tone and volume homeostasis by activation of protein kinase cGMP-dependent 1/PRKG1 and subsequently PRKAA1, thereby controlling blood pressure and maintaining cardiovascular homeostasis. The chain is Atrial natriuretic peptide receptor 1 (Npr1) from Mus musculus (Mouse).